Consider the following 137-residue polypeptide: Ribosome-binding factor A (137 aa).

The protein belongs to the RbfA family. Monomer. Binds 30S ribosomal subunits, but not 50S ribosomal subunits or 70S ribosomes.

It is found in the cytoplasm. Its function is as follows. One of several proteins that assist in the late maturation steps of the functional core of the 30S ribosomal subunit. Associates with free 30S ribosomal subunits (but not with 30S subunits that are part of 70S ribosomes or polysomes). Required for efficient processing of 16S rRNA. May interact with the 5'-terminal helix region of 16S rRNA. In Erwinia tasmaniensis (strain DSM 17950 / CFBP 7177 / CIP 109463 / NCPPB 4357 / Et1/99), this protein is Ribosome-binding factor A.